Consider the following 206-residue polypeptide: Large ribosomal subunit protein uL3 (206 aa).

The tract at residues 126–155 (HGHAGGPGAHGSRFHRHPGSMGANSTPSRV) is disordered.

The protein belongs to the universal ribosomal protein uL3 family. Part of the 50S ribosomal subunit. Forms a cluster with proteins L14 and L19.

In terms of biological role, one of the primary rRNA binding proteins, it binds directly near the 3'-end of the 23S rRNA, where it nucleates assembly of the 50S subunit. In Leptospira interrogans serogroup Icterohaemorrhagiae serovar copenhageni (strain Fiocruz L1-130), this protein is Large ribosomal subunit protein uL3.